We begin with the raw amino-acid sequence, 374 residues long: Proteasomal ubiquitin receptor ADRM1 homolog (374 aa).

One can recognise a Pru domain in the interval 13–131; that stretch reads SSSGHIVEFK…KKVTDALNKP (119 aa). Disordered stretches follow at residues 126 to 166, 187 to 223, and 334 to 374; these read DALN…MNAP, SDTL…NPLS, and ANLT…MDVD. 2 stretches are compositionally biased toward polar residues: residues 141–163 and 209–223; these read SAGS…SSDM and PSTN…NPLS. The DEUBAD domain occupies 239–346; that stretch reads SQKKEVAVSL…TKAEGGEDAA (108 aa). A compositionally biased stretch (basic and acidic residues) spans 354-368; sequence DATREPEPKRNRPDN.

This sequence belongs to the ADRM1 family. Component of the 19S proteasome regulatory particle complex. The 26S proteasome consists of a 20S core particle (CP) and two 19S regulatory subunits (RP). Interacts with deubiquitinase ubh-4.

Its subcellular location is the cytoplasm. The protein localises to the nucleus. Its function is as follows. May function as a proteasomal ubiquitin receptor. May promote the deubiquitinating activity associated with the 26S proteasome. The polypeptide is Proteasomal ubiquitin receptor ADRM1 homolog (Caenorhabditis elegans).